A 527-amino-acid chain; its full sequence is Pyruvate kinase 1, cytosolic (527 aa).

Arginine 58 contributes to the substrate binding site. Residues aspartate 60, serine 62, aspartate 92, and threonine 93 each contribute to the K(+) site. 60–63 contributes to the ATP binding site; the sequence is DFSW. Residue lysine 256 participates in substrate binding. Glutamate 258 is a binding site for Mg(2+). Residues glycine 281, asparagine 282, and threonine 313 each contribute to the substrate site. Asparagine 282 is a Mg(2+) binding site.

Belongs to the pyruvate kinase family. Homotetramer. Mg(2+) is required as a cofactor. K(+) serves as cofactor.

It is found in the cytoplasm. The protein resides in the cytosol. It carries out the reaction pyruvate + ATP = phosphoenolpyruvate + ADP + H(+). The protein operates within carbohydrate degradation; glycolysis; pyruvate from D-glyceraldehyde 3-phosphate: step 5/5. Key regulatory enzyme of the glycolytic pathway that catalyzes the final step of glycolysis, converting ADP and phosphoenolpyruvate (PEP) to ATP and pyruvate by essentially irreversible transphosphorylation. Is critical for plant growth and development. The protein is Pyruvate kinase 1, cytosolic of Oryza sativa subsp. indica (Rice).